A 475-amino-acid polypeptide reads, in one-letter code: Ribulose bisphosphate carboxylase large chain (475 aa).

A propeptide spanning residues 1–2 (MS) is cleaved from the precursor. Position 3 is an N-acetylproline (Pro3). Position 14 is an N6,N6,N6-trimethyllysine (Lys14). 2 residues coordinate substrate: Asn123 and Thr173. Lys175 acts as the Proton acceptor in catalysis. Position 177 (Lys177) interacts with substrate. The Mg(2+) site is built by Lys201, Asp203, and Glu204. Lys201 is modified (N6-carboxylysine). His294 acts as the Proton acceptor in catalysis. Residues Arg295, His327, and Ser379 each coordinate substrate.

The protein belongs to the RuBisCO large chain family. Type I subfamily. As to quaternary structure, heterohexadecamer of 8 large chains and 8 small chains; disulfide-linked. The disulfide link is formed within the large subunit homodimers. Mg(2+) serves as cofactor. The disulfide bond which can form in the large chain dimeric partners within the hexadecamer appears to be associated with oxidative stress and protein turnover.

It is found in the plastid. The protein localises to the chloroplast. The enzyme catalyses 2 (2R)-3-phosphoglycerate + 2 H(+) = D-ribulose 1,5-bisphosphate + CO2 + H2O. It catalyses the reaction D-ribulose 1,5-bisphosphate + O2 = 2-phosphoglycolate + (2R)-3-phosphoglycerate + 2 H(+). Functionally, ruBisCO catalyzes two reactions: the carboxylation of D-ribulose 1,5-bisphosphate, the primary event in carbon dioxide fixation, as well as the oxidative fragmentation of the pentose substrate in the photorespiration process. Both reactions occur simultaneously and in competition at the same active site. In Pseudolarix amabilis (Golden larch), this protein is Ribulose bisphosphate carboxylase large chain.